We begin with the raw amino-acid sequence, 283 residues long: DegV domain-containing protein lin2658 (283 aa).

The region spanning Ile-5 to Ile-282 is the DegV domain. Positions 63 and 96 each coordinate hexadecanoate.

May bind long-chain fatty acids, such as palmitate, and may play a role in lipid transport or fatty acid metabolism. This chain is DegV domain-containing protein lin2658, found in Listeria innocua serovar 6a (strain ATCC BAA-680 / CLIP 11262).